The following is a 921-amino-acid chain: AdoMet-dependent rRNA methyltransferase SPB1 (921 aa).

S-adenosyl-L-methionine is bound by residues Gly58, Trp60, Asp78, Asp94, and Asp119. Lys159 functions as the Proton acceptor in the catalytic mechanism. Residues 367 to 414 (VEEMDEDDQIDDELARLNEEAARKARKERRRKNELRQKKILKMQLQMT) adopt a coiled-coil conformation. Disordered regions lie at residues 448-476 (ALIQQADVSDDESETIVSSQHTDDDDPET), 491-604 (EFKQ…KRSL), 635-713 (ELDE…GKQK), 814-835 (LEKAQKKAETINENEDISEKEK), and 866-921 (RGLK…GPRN). Basic and acidic residues predominate over residues 491–522 (EFKQKQSERDAKFRAKQARLQDAKNDSWHGIK). 4 stretches are compositionally biased toward acidic residues: residues 523–542 (DDEENDEDDDEANLSDESEG), 555–568 (ETFDTDDEEDEEDE), 635–684 (ELDE…DDFE), and 697–708 (DEEWDLNGEDEE). Positions 796–835 (IKKVAEAKARKKMRTLRRLEKAQKKAETINENEDISEKEK) form a coiled coil. Basic and acidic residues predominate over residues 814–823 (LEKAQKKAET). Residues 868-879 (LKGRPKGTKGRY) are compositionally biased toward basic residues. Residues 880–892 (KMVDPRMKKELRA) are compositionally biased toward basic and acidic residues.

It belongs to the class I-like SAM-binding methyltransferase superfamily. RNA methyltransferase RlmE family. SPB1 subfamily. Component of the nucleolar and nucleoplasmic pre-60S ribosomal particle.

Its subcellular location is the nucleus. It localises to the nucleolus. It carries out the reaction a ribonucleotide in rRNA + S-adenosyl-L-methionine = a 2'-O-methylribonucleotide in rRNA + S-adenosyl-L-homocysteine + H(+). Required for proper assembly of pre-ribosomal particles during the biogenesis of the 60S ribosomal subunit. In Mycosarcoma maydis (Corn smut fungus), this protein is AdoMet-dependent rRNA methyltransferase SPB1.